We begin with the raw amino-acid sequence, 335 residues long: D-alanine--D-alanine ligase (335 aa).

The region spanning 124–330 (KMWFSALGVP…FTEYLSDVIS (207 aa)) is the ATP-grasp domain. Position 154–209 (154–209 (AFDTWGSVFIKAASQGSSVGCYKVDVRDNIAKVLEEAFGYAPYVVVEKTIKARELE)) interacts with ATP. Mg(2+) is bound by residues aspartate 284, glutamate 297, and asparagine 299.

The protein belongs to the D-alanine--D-alanine ligase family. Mg(2+) serves as cofactor. Mn(2+) is required as a cofactor.

It is found in the cytoplasm. It carries out the reaction 2 D-alanine + ATP = D-alanyl-D-alanine + ADP + phosphate + H(+). Its pathway is cell wall biogenesis; peptidoglycan biosynthesis. In terms of biological role, cell wall formation. The chain is D-alanine--D-alanine ligase from Shewanella denitrificans (strain OS217 / ATCC BAA-1090 / DSM 15013).